We begin with the raw amino-acid sequence, 1378 residues long: MASGWDERPPWRLESLRLLPPPPLLLLLLLLRSSAQAAHIKKAEATTTTVGGSEAAEGQFDHYYHEAALGEALEAAAAAGPPGLARLFSIGNSVEGRPLWVLRLTAGLGPPPTPAAVGLDAAGPLLPGRPQVKLVGNMHGDETVSRQVLVYLARELASGYRRGDPRLVRLLNTTDVYLLPSLNPDGFERAREGDCGLGDSGPPGTSGRDNSRGRDLNRSFPDQFSTGEPPSLDEVPEVRALIDWIRRNKFVLSGNLHGGSVVASYPFDDSPEHKTTGIYSKTSDDEVFRYLAKAYASNHPIMRTGEPHCPGDEEETFKDGITNGAHWYDVEGGMQDYNYVWANCFEITLELSCCKYPPASQLRQEWENNRESLITLIEKVHIGIKGFVKDSVTGSGLENATISVAGINHNITTGRFGDFHRLLIPGSYNLTAVSPGYMPLTINNIVVKEGPATEIDFSLQPTVMSVVPDSTEAVTTPGTVAVPNIPPGTPSSHQPIQPKDFHHHHFPDMEIFLRRFANEYPNITRLYSLGKSVESRELYVMEISDNPGVHEPGEPEFKYIGNMHGNEVVGRELLLNLIEYLCKNFGTDPEVTDLVRSTRIHLMPSMNPDGYEKSQEGDSISVVGRNNSNNFDLNRNFPDQFVPITDPTQPETIAVMSWVKAYPFVLSANLHGGSLVVNYPYDDNEQGVATYSKSPDDAVFQQIALSYSKENSQMFQGRPCKDMYLNEYFPHGITNGASWYNVPGGMQDWNYLQTNCFEVTIELGCVKYPFEKELPKYWEQNRRSLIQFMKQVHQGVKGFVLDATDGRGILNATLSVAEINHPVTTYKAGDYWRLLVPGTYKITASARGYNPVTKNVTVRSEGAIQVNFTLVRSSTDANNESKKGKGHSTSTDDTSDPTSKEFEALIKHLSAENGLEGFMLSSSSDLALYRYHSYKDLSEFLRGLVMNYPHITNLTTLGQSVEYRHIWSLEISNKPNISEPEEPKIRFVAGIHGNAPVGTELLLALAEFLCLNYKKNPVVTQLVDRTRIVIVPSLNPDGRERAQEKDCTSKTGHTNARGRDLDTDFTSNASQPETKAIIENLIQKQDFSLSIALDGGSVLVTYPYDKPVQTVENKETLKHLASLYANNHPSMHMGQPSCPNNSDENIPGGVMRGAEWHSHLGSMKDYSVTYGHCPEITVYTSCCYFPSAAQLPALWAENKKSLLSMLVEVHKGVHGLVKDKTGKPISKAVIVLNEGIRVHTKEGGYFHVLLAPGVHNINAIADGYQQQHSQVFVHHDAASSVVIVFDTDNRIFGLPRELVVTVSGATMSALILTACIIWCICSIKSNRHKDGFHRLRQHHDEYEDEIRMMSTGSKKSLLSHEFQDETDTEEETLYSSKH.

Positions 1 to 37 (MASGWDERPPWRLESLRLLPPPPLLLLLLLLRSSAQA) are cleaved as a signal peptide. Topologically, residues 38-1297 (AHIKKAEATT…DNRIFGLPRE (1260 aa)) are extracellular. A Peptidase M14 1 domain is found at 62–380 (HYYHEAALGE…ESLITLIEKV (319 aa)). The Zn(2+) site is built by His-139 and Glu-142. Residues 162-164 (RGD) carry the Cell attachment site motif. N-linked (GlcNAc...) asparagine glycosylation is found at Asn-172 and Asn-217. Residues 189-232 (RAREGDCGLGDSGPPGTSGRDNSRGRDLNRSFPDQFSTGEPPSL) form a disordered region. His-257 is a binding site for Zn(2+). Tyr-265 is modified (phosphotyrosine). A Phosphoserine modification is found at Ser-270. The active-site Proton donor/acceptor is Glu-350. Asn-399, Asn-410, Asn-429, and Asn-522 each carry an N-linked (GlcNAc...) asparagine glycan. A Peptidase M14 2 domain is found at 502-792 (HHHHFPDMEI…RSLIQFMKQV (291 aa)). Zn(2+) is bound by residues His-564 and Glu-567. Asn-626 is a glycosylation site (N-linked (GlcNAc...) asparagine). His-671 contributes to the Zn(2+) binding site. Residue Glu-762 is the Proton donor/acceptor of the active site. N-linked (GlcNAc...) asparagine glycosylation is found at Asn-811, Asn-855, Asn-867, Asn-879, Asn-953, and Asn-976. Positions 875-898 (TDANNESKKGKGHSTSTDDTSDPT) are disordered. In terms of domain architecture, Peptidase M14 3 spans 930–1209 (RYHSYKDLSE…KSLLSMLVEV (280 aa)). The segment covering 1039–1048 (RERAQEKDCT) has biased composition (basic and acidic residues). A disordered region spans residues 1039 to 1068 (RERAQEKDCTSKTGHTNARGRDLDTDFTSN). 2 N-linked (GlcNAc...) asparagine glycosylation sites follow: Asn-1068 and Asn-1140. A helical membrane pass occupies residues 1298-1318 (LVVTVSGATMSALILTACIIW). S-palmitoyl cysteine attachment occurs at residues Cys-1315, Cys-1319, and Cys-1321. The Cytoplasmic portion of the chain corresponds to 1319 to 1378 (CICSIKSNRHKDGFHRLRQHHDEYEDEIRMMSTGSKKSLLSHEFQDETDTEEETLYSSKH). A phosphoserine mark is found at Ser-1356 and Ser-1359. The segment at 1357–1378 (LLSHEFQDETDTEEETLYSSKH) is disordered. Thr-1366 and Thr-1368 each carry phosphothreonine.

The protein belongs to the peptidase M14 family. It depends on Zn(2+) as a cofactor. In terms of tissue distribution, isoform 1 is widely expressed with highest levels in the hippocampus, spinal cord, atrium, colon, testis and ovaries. Detected in the liver of females but not males. Isoform 2 is not detected in brain or lung.

It localises to the cell membrane. The protein resides in the nucleus. It catalyses the reaction Releases C-terminal Arg and Lys from polypeptides.. The chain is Carboxypeptidase D from Rattus norvegicus (Rat).